Here is a 205-residue protein sequence, read N- to C-terminus: GTP cyclohydrolase-2 (205 aa).

Residue 49 to 53 (RLHSE) coordinates GTP. Residues C54, C65, and C67 each coordinate Zn(2+). GTP contacts are provided by residues Q70, 92-94 (EGR), and T114. D126 functions as the Proton acceptor in the catalytic mechanism. The active-site Nucleophile is the R128. 2 residues coordinate GTP: T149 and K154.

It belongs to the GTP cyclohydrolase II family. Zn(2+) is required as a cofactor.

The catalysed reaction is GTP + 4 H2O = 2,5-diamino-6-hydroxy-4-(5-phosphoribosylamino)-pyrimidine + formate + 2 phosphate + 3 H(+). The protein operates within cofactor biosynthesis; riboflavin biosynthesis; 5-amino-6-(D-ribitylamino)uracil from GTP: step 1/4. Functionally, catalyzes the conversion of GTP to 2,5-diamino-6-ribosylamino-4(3H)-pyrimidinone 5'-phosphate (DARP), formate and pyrophosphate. The sequence is that of GTP cyclohydrolase-2 from Pseudomonas putida (strain GB-1).